The sequence spans 173 residues: Superoxide dismutase [Cu-Zn] (173 aa).

The N-terminal stretch at 1–19 (MKSLFIASTMVLMAFPAFA) is a signal peptide. His67, His69, and His92 together coordinate Cu cation. An intrachain disulfide couples Cys74 to Cys169. Zn(2+) contacts are provided by His92, His101, His109, and Asp112. His147 serves as a coordination point for Cu cation.

The protein belongs to the Cu-Zn superoxide dismutase family. As to quaternary structure, homodimer. Cu cation serves as cofactor. It depends on Zn(2+) as a cofactor.

Its subcellular location is the periplasm. The enzyme catalyses 2 superoxide + 2 H(+) = H2O2 + O2. Its function is as follows. Destroys radicals which are normally produced within the cells and which are toxic to biological systems. The protein is Superoxide dismutase [Cu-Zn] (sodC) of Brucella abortus biovar 1 (strain 9-941).